Here is a 188-residue protein sequence, read N- to C-terminus: MKLVPVALLYLGSLAFLGVDTARLDVAAEFRKKWNKWALSRGKRELRESSSYPTGLADVKAGPVQTLIRPQDVKGASRSPQASSPDAARIRVKRYRQSLNNFQGLRSFGCRFGTCTVQKLAHQIYHFTDKDKDGSAPRSKISPQGYGRRRRRSLPEAGLGRTLLQPPEPKLRGAPDSRVHQVLATLRI.

The first 21 residues, 1–21 (MKLVPVALLYLGSLAFLGVDT), serve as a signal peptide directing secretion. Position 41 is an arginine amide (Arg41). The propeptide occupies 45–92 (ELRESSSYPTGLADVKAGPVQTLIRPQDVKGASRSPQASSPDAARIRV). Residues 69 to 89 (RPQDVKGASRSPQASSPDAAR) form a disordered region. A disulfide bridge connects residues Cys110 and Cys115. The segment at 129–175 (DKDKDGSAPRSKISPQGYGRRRRRSLPEAGLGRTLLQPPEPKLRGAP) is disordered. Tyr146 carries the tyrosine amide modification. Residues 153–188 (SLPEAGLGRTLLQPPEPKLRGAPDSRVHQVLATLRI) constitute a propeptide, preproAM C-terminal fragment.

This sequence belongs to the adrenomedullin family.

It is found in the secreted. Functionally, adrenomedullin/ADM and proadrenomedullin N-20 terminal peptide/PAMP are peptide hormones that act as potent hypotensive and vasodilatator agents. Numerous actions have been reported most related to the physiologic control of fluid and electrolyte homeostasis. ADM function is mediated by the CALCRL-RAMP2 and CALCRL-RAMP3 receptor complexes with ADM showing the highest potency for the CALCRL-RAMP2 complex. This chain is Pro-adrenomedullin (ADM), found in Bos taurus (Bovine).